The primary structure comprises 601 residues: Glutamine--fructose-6-phosphate aminotransferase [isomerizing] (601 aa).

Residue Cys-2 is the Nucleophile; for GATase activity of the active site. The Glutamine amidotransferase type-2 domain occupies 2 to 214 (CGITGYIGTD…NGDIAHLTET (213 aa)). 2 consecutive SIS domains span residues 281-420 (STET…ARNA) and 453-591 (IGRE…IDKP). The active-site For Fru-6P isomerization activity is Lys-596.

In terms of assembly, homodimer.

It localises to the cytoplasm. It carries out the reaction D-fructose 6-phosphate + L-glutamine = D-glucosamine 6-phosphate + L-glutamate. In terms of biological role, catalyzes the first step in hexosamine metabolism, converting fructose-6P into glucosamine-6P using glutamine as a nitrogen source. The protein is Glutamine--fructose-6-phosphate aminotransferase [isomerizing] of Halobacterium salinarum (strain ATCC 700922 / JCM 11081 / NRC-1) (Halobacterium halobium).